The chain runs to 903 residues: Glutamate receptor ionotropic, NMDA 1 (903 aa).

An N-terminal signal peptide occupies residues 1–20 (MGTMRLFLLAVLFLFSFARA). Residues 21 to 557 (GCDPKIVNIG…TLDSFMQPFQ (537 aa)) are Extracellular-facing. N-linked (GlcNAc...) asparagine glycans are attached at residues N61, N203, N276, N300, N350, N368, N440, N469, and N489. C79 and C308 form a disulfide bridge. Intrachain disulfides connect C420–C452 and C436–C453. Glycine is bound by residues P514, T516, and R521. Residues 558–578 (STLWLLVGLSVHVVAVMLYLL) traverse the membrane as a helical segment. Over 579–600 (DRFSPFGRFKVNSEEEEEDALT) the chain is Cytoplasmic. The tract at residues 601 to 620 (LSSAMWFSWGVLLNSGIGEG) is pore-forming. Positions 601–622 (LSSAMWFSWGVLLNSGIGEGAP) form an intramembrane region, discontinuously helical. At 623 to 628 (RSFSAR) the chain is on the cytoplasmic side. The chain crosses the membrane as a helical span at residues 629–645 (ILGMVWAGFAMIIVASY). The Extracellular portion of the chain corresponds to 646–810 (TANLAAFLVL…NAPATLTFEN (165 aa)). Glycine contacts are provided by S686 and D730. A disulfide bond links C742 and C796. N-linked (GlcNAc...) asparagine glycosylation occurs at N769. The helical transmembrane segment at 811 to 831 (MAGVFMLVAGGIVAGIFLIFI) threads the bilayer. Residues 832–903 (EIAYKRHKDA…SSKDTVNVVV (72 aa)) are Cytoplasmic-facing.

This sequence belongs to the glutamate-gated ion channel (TC 1.A.10.1) family. NR1/GRIN1 subfamily. As to quaternary structure, heterotetramer; the NMDAR subunits are modular and harbor tiered domains that function in concert to regulate opening and closing of the cation-selective ion channel pore. Forms heterotetrameric channels composed of two GluN1/zeta subunits (GRIN1), and two identical GluN2/epsilon subunits (GRIN2A, GRIN2B, GRIN2C or GRIN2D) or GluN3 subunits (GRIN3A or GRIN3B) (in vitro). Does not form functional channels by itself. Can also form heterotetrameric channels that contain at least two GluN1 subunits and at least two different GluN2 subunits (or a combination of one GluN2 and one GluN3 subunits) (in vitro). In vivo, the subunit composition may vary in function of the expression levels of the different subunits.

It is found in the cell membrane. The protein resides in the postsynaptic cell membrane. Its subcellular location is the postsynaptic density membrane. The protein localises to the synaptic cell membrane. It catalyses the reaction Ca(2+)(in) = Ca(2+)(out). It carries out the reaction Na(+)(in) = Na(+)(out). The catalysed reaction is K(+)(in) = K(+)(out). NMDA glutamate receptor activity is modulated by zinc ions. The NMDA glutamate receptor activity of the heterotetramer with grin2b is stimulated by micromolar levels of Zn(2+). The NMDA glutamate receptor activity of the heterotetramer with grin2a is inhibited by nanomolar levels of Zn(2+). Functionally, component of N-methyl-D-aspartate (NMDA) receptors (NMDARs) that function as heterotetrameric, ligand-gated cation channels with high calcium permeability and voltage-dependent block by Mg(2+). NMDARs participate in synaptic plasticity. Channel activation requires binding of the neurotransmitter L-glutamate to the GluN2 subunit, glycine binding to the GluN1 subunit, plus membrane depolarization to eliminate channel inhibition by Mg(2+). NMDARs mediate simultaneously the potasium efflux and the influx of calcium and sodium. Each GluN2 or GluN3 subunit confers differential attributes to channel properties, including activation, deactivation and desensitization kinetics, pH sensitivity, Ca2(+) permeability, and binding to allosteric modulators. The chain is Glutamate receptor ionotropic, NMDA 1 from Xenopus laevis (African clawed frog).